The chain runs to 37 residues: Cytochrome b6-f complex subunit 7 (37 aa).

Residues 11 to 29 (AVILMVLVLFGLAWGFLIL) traverse the membrane as a helical segment.

The protein belongs to the PetM family. As to quaternary structure, the 4 large subunits of the cytochrome b6-f complex are cytochrome b6, subunit IV (17 kDa polypeptide, PetD), cytochrome f and the Rieske protein, while the 4 small subunits are PetG, PetL, PetM and PetN. The complex functions as a dimer.

It is found in the cellular thylakoid membrane. Component of the cytochrome b6-f complex, which mediates electron transfer between photosystem II (PSII) and photosystem I (PSI), cyclic electron flow around PSI, and state transitions. The protein is Cytochrome b6-f complex subunit 7 of Crocosphaera subtropica (strain ATCC 51142 / BH68) (Cyanothece sp. (strain ATCC 51142)).